The primary structure comprises 586 residues: ATP-dependent lipid A-core flippase (586 aa).

Transmembrane regions (helical) follow at residues 25-45, 74-94, 163-183, and 264-284; these read AYFIISFIGFGVFAAMEAQLI, LWFVPISVVVLSIIRGIGAYF, VAWFLAMMLIINWKLTLAFIC, and VLHIVLALALAVTFYLIMILW. In terms of domain architecture, ABC transmembrane type-1 spans 28 to 317; it reads IISFIGFGVF…LTKINSIIQK (290 aa). The ABC transporter domain maps to 349–583; it reads VELKDVHFGY…SGVYANLYHS (235 aa). 382-389 is a binding site for ATP; that stretch reads GSSGSGKS.

This sequence belongs to the ABC transporter superfamily. Lipid exporter (TC 3.A.1.106) family. In terms of assembly, homodimer.

It is found in the cell inner membrane. It catalyses the reaction ATP + H2O + lipid A-core oligosaccharideSide 1 = ADP + phosphate + lipid A-core oligosaccharideSide 2.. Involved in lipopolysaccharide (LPS) biosynthesis. Translocates lipid A-core from the inner to the outer leaflet of the inner membrane. Transmembrane domains (TMD) form a pore in the inner membrane and the ATP-binding domain (NBD) is responsible for energy generation. In Saccharophagus degradans (strain 2-40 / ATCC 43961 / DSM 17024), this protein is ATP-dependent lipid A-core flippase.